The chain runs to 432 residues: Casein kinase II subunit alpha-4, chloroplastic (432 aa).

Residues 1 to 55 constitute a chloroplast transit peptide; the sequence is MALRPCTGFTISSLRNASAANNNLFSLLSFSSSSPAKRNLLLSSLQDNLRRFASS. Residues 63-83 form a disordered region; sequence LRNQQQQHQQQQQSRVKEKSE. Positions 66-75 are enriched in low complexity; the sequence is QQQQHQQQQQ. One can recognise a Protein kinase domain in the interval 132 to 417; it reads YEVVRKVGRG…AKEAMAHPYF (286 aa). ATP contacts are provided by residues 138-146 and Lys-161; that span reads VGRGKYSEV. The active-site Proton acceptor is the Asp-249.

It belongs to the protein kinase superfamily. Ser/Thr protein kinase family. CK2 subfamily. As to quaternary structure, tetramer of two alpha and two beta chains. In terms of tissue distribution, expressed in root tips, lateral root primordia, cotyledons, leaf primordia, sepals, filaments, stigma, and anthers.

Its subcellular location is the plastid. It is found in the chloroplast. It catalyses the reaction L-seryl-[protein] + ATP = O-phospho-L-seryl-[protein] + ADP + H(+). The catalysed reaction is L-threonyl-[protein] + ATP = O-phospho-L-threonyl-[protein] + ADP + H(+). Its function is as follows. Casein kinases are operationally defined by their preferential utilization of acidic proteins such as caseins as substrates. The alpha chain contains the catalytic site. Involved in the regulation of various developmental processes. Involved in the regulation of plant growth and flowering time. Involved in retrograde signaling in plant responses to abscisic acid (ABA) and heat stress. May act as an enhancing factor in abiotic stress signaling through modulation of the expression of some molecular players in retrograde signaling. Phosphorylates RuBisCo activase (RCA) at Thr-78. This chain is Casein kinase II subunit alpha-4, chloroplastic, found in Arabidopsis thaliana (Mouse-ear cress).